The chain runs to 364 residues: Pre-mRNA-splicing factor SLT11 (364 aa).

The tract at residues 331 to 364 (KSTDNAKNDKKKTSKKVHKDRSKKSKPRANKLTI) is disordered. A compositionally biased stretch (basic residues) spans 339-364 (DKKKTSKKVHKDRSKKSKPRANKLTI).

It belongs to the SLT11 family. In terms of assembly, belongs to the CWC complex (or CEF1-associated complex), a spliceosome subcomplex composed of the U2, U5 and U6 snRNAs and at least BUD13, BUD31, BRR2, CDC40, CEF1, CLF1, CUS1, CWC2, CWC15, CWC21, CWC22, CWC23, CWC24, CWC25, CWC27, ECM2, HSH155, IST3, ISY1, LEA1, MSL1, NTC20, PRP8, PRP9, PRP11, PRP19, PRP21, PRP22, PRP45, PRP46, SLU7, SMB1, SMD1, SMD2, SMD3, SMX2, SMX3, SNT309, SNU114, SPP2, SYF1, SYF2, RSE1 and YJU2. Interacts with SLU7.

The protein resides in the nucleus. Involved in pre-mRNA splicing. Facilitates the cooperative formation of U2/U6 helix II in association with stem II in the spliceosome. Binds to RNA. The protein is Pre-mRNA-splicing factor SLT11 (ECM2) of Saccharomyces cerevisiae (strain ATCC 204508 / S288c) (Baker's yeast).